The primary structure comprises 345 residues: Probable RuBisCO transcriptional regulator (345 aa).

One can recognise an HTH lysR-type domain in the interval 6–63 (FTLDQLRILKAIASEGSFKRAADTLYVSQPAVSLQVQNLEKQLSVPLFDRGGRKAQLT). The segment at residues 23–42 (FKRAADTLYVSQPAVSLQVQ) is a DNA-binding region (H-T-H motif). The interval 311 to 345 (LDPERLFANPYSSNNGDRQGDGKDGKGSIEIDSVT) is disordered. Over residues 328-339 (RQGDGKDGKGSI) the composition is skewed to basic and acidic residues.

Belongs to the LysR transcriptional regulatory family.

Trans-acting transcriptional regulator of RuBisCO genes (rbcL and rbcS) expression. The sequence is that of Probable RuBisCO transcriptional regulator (rbcR) from Synechocystis sp. (strain ATCC 27184 / PCC 6803 / Kazusa).